Consider the following 116-residue polypeptide: NADH-quinone oxidoreductase subunit A (116 aa).

3 helical membrane-spanning segments follow: residues 3-23 (FTFL…VIAL), 61-81 (FAIL…WAVV), and 88-108 (QGLV…AYAW).

The protein belongs to the complex I subunit 3 family. NDH-1 is composed of 14 different subunits. Subunits NuoA, H, J, K, L, M, N constitute the membrane sector of the complex.

It is found in the cell inner membrane. It carries out the reaction a quinone + NADH + 5 H(+)(in) = a quinol + NAD(+) + 4 H(+)(out). Its function is as follows. NDH-1 shuttles electrons from NADH, via FMN and iron-sulfur (Fe-S) centers, to quinones in the respiratory chain. The immediate electron acceptor for the enzyme in this species is believed to be a menaquinone. Couples the redox reaction to proton translocation (for every two electrons transferred, four hydrogen ions are translocated across the cytoplasmic membrane), and thus conserves the redox energy in a proton gradient. In Bacteroides thetaiotaomicron (strain ATCC 29148 / DSM 2079 / JCM 5827 / CCUG 10774 / NCTC 10582 / VPI-5482 / E50), this protein is NADH-quinone oxidoreductase subunit A.